Consider the following 104-residue polypeptide: L-rhamnose mutarotase (104 aa).

Residue Tyr-18 coordinates substrate. The Proton donor role is filled by His-22. Substrate-binding positions include Tyr-41 and 76-77 (WW).

It belongs to the rhamnose mutarotase family. As to quaternary structure, homodimer.

Its subcellular location is the cytoplasm. It catalyses the reaction alpha-L-rhamnose = beta-L-rhamnose. It participates in carbohydrate metabolism; L-rhamnose metabolism. Its function is as follows. Involved in the anomeric conversion of L-rhamnose. The polypeptide is L-rhamnose mutarotase (Citrobacter koseri (strain ATCC BAA-895 / CDC 4225-83 / SGSC4696)).